Here is a 146-residue protein sequence, read N- to C-terminus: Small ribosomal subunit protein uS9x (146 aa).

Belongs to the universal ribosomal protein uS9 family.

It localises to the cytoplasm. This chain is Small ribosomal subunit protein uS9x (RPS16C), found in Arabidopsis thaliana (Mouse-ear cress).